The primary structure comprises 463 residues: Serine/threonine-protein kinase sgk-1 (463 aa).

One can recognise a Protein kinase domain in the interval 135–392 (FDYLTTIGKG…FRDIRDHPFF (258 aa)). Residues 141–149 (IGKGSFGRV) and Lys164 contribute to the ATP site. The active-site Proton acceptor is Asp259. In terms of domain architecture, AGC-kinase C-terminal spans 393–463 (LPVDWDKLLN…TFVDTNRVLV (71 aa)).

This sequence belongs to the protein kinase superfamily. AGC Ser/Thr protein kinase family. Interacts with pdk-1, akt-1, akt-2 and daf-16. Part of a complex containing sgk-1, akt-1 and akt-2. Interacts with let-92 phosphatase regulatory subunit pptr-1. Mg(2+) serves as cofactor. In terms of tissue distribution, expressed in late embryos just before hatching. At postembryonic stages, expressed in sensory and motor neurons and in the intestine. Highly expressed in the intestine and head and tail neurons.

It localises to the cytoplasm. The protein resides in the nucleus. It is found in the apical cell membrane. The catalysed reaction is L-seryl-[protein] + ATP = O-phospho-L-seryl-[protein] + ADP + H(+). The enzyme catalyses L-threonyl-[protein] + ATP = O-phospho-L-threonyl-[protein] + ADP + H(+). With respect to regulation, phosphorylated and activated by pdk-1. In terms of biological role, acts downstream of PI3 kinase age-1 and kinase pdk-1 in the daf-2/insulin receptor-like transduction pathway. Essential role in regulating development, stress response, and longevity. Phosphorylates Forkhead-related daf-16 and the longevity-promoting skn-1 transcription factors, which inhibits their entry into the nucleus and antagonizes their function. Promotes the cytoplasmic localization of the transcription factor pqm-1. Plays a role in the intracellular trafficking of proteins such as mig-14 to the cell membrane, and this may be through positively regulating ceramide synthesis. Acts downstream of rict-1 to regulate fat storage, size, development and vitellogenesis. Downstream of age-1 and together with akt-1/2, promotes cell survival during embryonic development. Plays a role in maintaining the gonadal basement membrane through antagonizing akt-1 activity. Does not appear to play a role in immune function. This chain is Serine/threonine-protein kinase sgk-1, found in Caenorhabditis elegans.